The sequence spans 490 residues: Aspartyl/glutamyl-tRNA(Asn/Gln) amidotransferase subunit B (490 aa).

The protein belongs to the GatB/GatE family. GatB subfamily. In terms of assembly, heterotrimer of A, B and C subunits.

The enzyme catalyses L-glutamyl-tRNA(Gln) + L-glutamine + ATP + H2O = L-glutaminyl-tRNA(Gln) + L-glutamate + ADP + phosphate + H(+). It carries out the reaction L-aspartyl-tRNA(Asn) + L-glutamine + ATP + H2O = L-asparaginyl-tRNA(Asn) + L-glutamate + ADP + phosphate + 2 H(+). In terms of biological role, allows the formation of correctly charged Asn-tRNA(Asn) or Gln-tRNA(Gln) through the transamidation of misacylated Asp-tRNA(Asn) or Glu-tRNA(Gln) in organisms which lack either or both of asparaginyl-tRNA or glutaminyl-tRNA synthetases. The reaction takes place in the presence of glutamine and ATP through an activated phospho-Asp-tRNA(Asn) or phospho-Glu-tRNA(Gln). In Methylobacterium nodulans (strain LMG 21967 / CNCM I-2342 / ORS 2060), this protein is Aspartyl/glutamyl-tRNA(Asn/Gln) amidotransferase subunit B.